We begin with the raw amino-acid sequence, 447 residues long: Probable asparagine--tRNA ligase, cytoplasmic (447 aa).

Belongs to the class-II aminoacyl-tRNA synthetase family.

It is found in the cytoplasm. It carries out the reaction tRNA(Asn) + L-asparagine + ATP = L-asparaginyl-tRNA(Asn) + AMP + diphosphate + H(+). This Vairimorpha ceranae (strain BRL01) (Microsporidian parasite) protein is Probable asparagine--tRNA ligase, cytoplasmic.